Consider the following 227-residue polypeptide: Ribonuclease S-5 (227 aa).

Residues 1–27 form the signal peptide; it reads MGITGMVYVVTMVFLLIVLILSSSTVG. Gln36 is an RNA binding site. A disulfide bridge connects residues Cys42 and Cys49. Asn45 carries an N-linked (GlcNAc...) asparagine glycan. RNA-binding positions include His60, 97–98, Phe107, 110–111, and 114–115; these read NV, KE, and KH. The Proton donor role is filled by His60. Residues Cys75 and Cys118 are joined by a disulfide bond. Glu111 is a catalytic residue. His115 serves as the catalytic Proton acceptor. An N-linked (GlcNAc...) asparagine glycan is attached at Asn143. Intrachain disulfides connect Cys182/Cys220 and Cys197/Cys208.

Belongs to the RNase T2 family. In terms of processing, N-glycan at Asn-45 consists of disaccharide (GlcNAc-GlcNAc). N-linked core structure at Asn-143 contains xylose.

It catalyses the reaction a ribonucleotidyl-ribonucleotide-RNA + H2O = a 3'-end 3'-phospho-ribonucleotide-RNA + a 5'-end dephospho-ribonucleoside-RNA + H(+). In terms of biological role, self-incompatibility (SI) is the inherited ability of a flowering plant to prevent self-fertilization by discriminating between self and non-self pollen during pollination. In many species, self-incompatibility is controlled by the single, multiallelic locus S. In Pyrus pyrifolia (Chinese pear), this protein is Ribonuclease S-5.